The following is a 487-amino-acid chain: Protein nucleotidyltransferase YdiU (487 aa).

Glycine 90, glycine 92, arginine 93, lysine 113, aspartate 125, glycine 126, arginine 176, and arginine 183 together coordinate ATP. Aspartate 252 acts as the Proton acceptor in catalysis. Residues asparagine 253 and aspartate 262 each contribute to the Mg(2+) site. An ATP-binding site is contributed by aspartate 262.

The protein belongs to the SELO family. Requires Mg(2+) as cofactor. Mn(2+) is required as a cofactor.

The catalysed reaction is L-seryl-[protein] + ATP = 3-O-(5'-adenylyl)-L-seryl-[protein] + diphosphate. It carries out the reaction L-threonyl-[protein] + ATP = 3-O-(5'-adenylyl)-L-threonyl-[protein] + diphosphate. The enzyme catalyses L-tyrosyl-[protein] + ATP = O-(5'-adenylyl)-L-tyrosyl-[protein] + diphosphate. It catalyses the reaction L-histidyl-[protein] + UTP = N(tele)-(5'-uridylyl)-L-histidyl-[protein] + diphosphate. The catalysed reaction is L-seryl-[protein] + UTP = O-(5'-uridylyl)-L-seryl-[protein] + diphosphate. It carries out the reaction L-tyrosyl-[protein] + UTP = O-(5'-uridylyl)-L-tyrosyl-[protein] + diphosphate. Functionally, nucleotidyltransferase involved in the post-translational modification of proteins. It can catalyze the addition of adenosine monophosphate (AMP) or uridine monophosphate (UMP) to a protein, resulting in modifications known as AMPylation and UMPylation. In Pseudomonas fluorescens (strain ATCC BAA-477 / NRRL B-23932 / Pf-5), this protein is Protein nucleotidyltransferase YdiU.